A 341-amino-acid chain; its full sequence is tRNA N6-adenosine threonylcarbamoyltransferase (341 aa).

Residues His-111 and His-115 each coordinate Fe cation. Residues 134 to 138, Asp-167, Gly-180, and Asn-274 each bind substrate; that span reads LVSGG. Asp-302 provides a ligand contact to Fe cation.

Belongs to the KAE1 / TsaD family. Fe(2+) is required as a cofactor.

It localises to the cytoplasm. The catalysed reaction is L-threonylcarbamoyladenylate + adenosine(37) in tRNA = N(6)-L-threonylcarbamoyladenosine(37) in tRNA + AMP + H(+). Functionally, required for the formation of a threonylcarbamoyl group on adenosine at position 37 (t(6)A37) in tRNAs that read codons beginning with adenine. Is involved in the transfer of the threonylcarbamoyl moiety of threonylcarbamoyl-AMP (TC-AMP) to the N6 group of A37, together with TsaE and TsaB. TsaD likely plays a direct catalytic role in this reaction. The sequence is that of tRNA N6-adenosine threonylcarbamoyltransferase from Paraburkholderia phymatum (strain DSM 17167 / CIP 108236 / LMG 21445 / STM815) (Burkholderia phymatum).